A 269-amino-acid polypeptide reads, in one-letter code: Hemin import ATP-binding protein HmuV (269 aa).

Residues 2-242 (LEVIHTGLNI…AMVEACFDLP (241 aa)) enclose the ABC transporter domain. 34–41 (GPNGAGKS) provides a ligand contact to ATP.

Belongs to the ABC transporter superfamily. Heme (hemin) importer (TC 3.A.1.14.5) family. In terms of assembly, the complex is composed of two ATP-binding proteins (HmuV), two transmembrane proteins (HmuU) and a solute-binding protein (HmuT).

Its subcellular location is the cell inner membrane. Its function is as follows. Part of the ABC transporter complex HmuTUV involved in hemin import. Responsible for energy coupling to the transport system. In Methylobacillus flagellatus (strain ATCC 51484 / DSM 6875 / VKM B-1610 / KT), this protein is Hemin import ATP-binding protein HmuV.